A 336-amino-acid chain; its full sequence is Fructose-1,6-bisphosphatase class 1 (336 aa).

Positions 92, 115, 117, and 118 each coordinate Mg(2+). Substrate is bound by residues 118-121 (DGSS), Asn211, Tyr244, 262-264 (YLY), and Lys274. Position 280 (Glu280) interacts with Mg(2+).

Belongs to the FBPase class 1 family. As to quaternary structure, homotetramer. The cofactor is Mg(2+).

The protein resides in the cytoplasm. The catalysed reaction is beta-D-fructose 1,6-bisphosphate + H2O = beta-D-fructose 6-phosphate + phosphate. It participates in carbohydrate biosynthesis; gluconeogenesis. This is Fructose-1,6-bisphosphatase class 1 from Hahella chejuensis (strain KCTC 2396).